We begin with the raw amino-acid sequence, 476 residues long: Aspartyl/glutamyl-tRNA(Asn/Gln) amidotransferase subunit B (476 aa).

Belongs to the GatB/GatE family. GatB subfamily. As to quaternary structure, heterotrimer of A, B and C subunits.

It catalyses the reaction L-glutamyl-tRNA(Gln) + L-glutamine + ATP + H2O = L-glutaminyl-tRNA(Gln) + L-glutamate + ADP + phosphate + H(+). The enzyme catalyses L-aspartyl-tRNA(Asn) + L-glutamine + ATP + H2O = L-asparaginyl-tRNA(Asn) + L-glutamate + ADP + phosphate + 2 H(+). Functionally, allows the formation of correctly charged Asn-tRNA(Asn) or Gln-tRNA(Gln) through the transamidation of misacylated Asp-tRNA(Asn) or Glu-tRNA(Gln) in organisms which lack either or both of asparaginyl-tRNA or glutaminyl-tRNA synthetases. The reaction takes place in the presence of glutamine and ATP through an activated phospho-Asp-tRNA(Asn) or phospho-Glu-tRNA(Gln). This Oleidesulfovibrio alaskensis (strain ATCC BAA-1058 / DSM 17464 / G20) (Desulfovibrio alaskensis) protein is Aspartyl/glutamyl-tRNA(Asn/Gln) amidotransferase subunit B.